Consider the following 236-residue polypeptide: ATP synthase subunit a (236 aa).

Helical transmembrane passes span 18-38 (SNLLMVTVASVIVFLIAVLCT), 80-100 (VTLLMYIFVSNMLGLPFAIVI), 112-132 (DPAITLTLAVMVVVLSHYYGI), 179-199 (ILLSLLAGLATTGFLGTIGAA), and 200-220 (IPMLLWQGFSIFVGAIQAFIF).

The protein belongs to the ATPase A chain family. In terms of assembly, F-type ATPases have 2 components, CF(1) - the catalytic core - and CF(0) - the membrane proton channel. CF(1) has five subunits: alpha(3), beta(3), gamma(1), delta(1), epsilon(1). CF(0) has three main subunits: a(1), b(2) and c(9-12). The alpha and beta chains form an alternating ring which encloses part of the gamma chain. CF(1) is attached to CF(0) by a central stalk formed by the gamma and epsilon chains, while a peripheral stalk is formed by the delta and b chains.

The protein localises to the cell membrane. Its function is as follows. Key component of the proton channel; it plays a direct role in the translocation of protons across the membrane. The polypeptide is ATP synthase subunit a (Priestia megaterium (strain ATCC 12872 / QMB1551) (Bacillus megaterium)).